The primary structure comprises 995 residues: UPF0182 protein NFA_45260 (995 aa).

7 consecutive transmembrane segments (helical) span residues 18–38, 63–83, 115–135, 176–196, 211–231, 260–280, and 288–308; these read VLLV…RFTD, IILF…ALLL, FGIG…QSNW, FVAV…FGGL, IQLA…YWFD, KLIL…GVVL, and MAAA…PLVV. Positions 904–957 are disordered; sequence ATPFGGDPATRPQPGTAPPVVDSTQPPADGGTPQPQTTPPPTGSAAKDAAAAEL. Low complexity-rich tracts occupy residues 927 to 938 and 946 to 955; these read TQPPADGGTPQP and GSAAKDAAAA.

The protein belongs to the UPF0182 family.

The protein localises to the cell membrane. The protein is UPF0182 protein NFA_45260 of Nocardia farcinica (strain IFM 10152).